Reading from the N-terminus, the 48-residue chain is Small, acid-soluble spore protein P (48 aa).

Over residues 1-19 (MTNKNTGKDIRQNSPKEHQ) the composition is skewed to basic and acidic residues. The segment at 1–48 (MTNKNTGKDIRQNSPKEHQSGQPEPLSGSKKVKNRNHTRQKHNSHHDM) is disordered. Residues 30-48 (KKVKNRNHTRQKHNSHHDM) are compositionally biased toward basic residues.

The protein belongs to the SspP family.

The protein resides in the spore core. The protein is Small, acid-soluble spore protein P of Bacillus pumilus (strain SAFR-032).